The chain runs to 78 residues: MSNKGQTLQDPFLNTLRKEHVPVSIYLVNGIKLQGQIESFDQYVVLLRNTVTQMVYKHAISTVVPARAVNFQVEVPAE.

The Sm domain occupies 10-69 (DPFLNTLRKEHVPVSIYLVNGIKLQGQIESFDQYVVLLRNTVTQMVYKHAISTVVPARAV).

The protein belongs to the Hfq family. In terms of assembly, homohexamer.

In terms of biological role, RNA chaperone that binds small regulatory RNA (sRNAs) and mRNAs to facilitate mRNA translational regulation in response to envelope stress, environmental stress and changes in metabolite concentrations. Also binds with high specificity to tRNAs. The sequence is that of RNA-binding protein Hfq from Bordetella bronchiseptica (strain ATCC BAA-588 / NCTC 13252 / RB50) (Alcaligenes bronchisepticus).